An 842-amino-acid chain; its full sequence is Type VI secretion system spike protein VgrG2a (842 aa).

Residues 265-291 (RSGAGRPFSESRLRGHRRDARVASVSG) are disordered.

This sequence belongs to the VgrG protein family.

Functionally, part of the H2 type VI secretion system (H2-T6SS) specialized secretion system, which delivers several virulence factors in both prokaryotic and eukaryotic cells during infection. May form the spike at the tip of the elongating tube formed by haemolysin co-regulated protein 2a/Hcp2a. In turn, may allow the delivery of the Tle4 antibacterial toxin to target cells where it exerts its toxicity. Also promotes the release of VgrG2b toxin to the host cell. The chain is Type VI secretion system spike protein VgrG2a from Pseudomonas aeruginosa (strain ATCC 15692 / DSM 22644 / CIP 104116 / JCM 14847 / LMG 12228 / 1C / PRS 101 / PAO1).